A 76-amino-acid polypeptide reads, in one-letter code: Virulence-associated protein VagC (76 aa).

The SpoVT-AbrB domain maps to 4–45 (VSIFKNGNNRAIRLPRDLDFEGVSELEIVREGDSIILRPVRP).

The protein belongs to the VapB family.

The sequence is that of Virulence-associated protein VagC (vagC) from Salmonella dublin.